The primary structure comprises 215 residues: Redox-sensing transcriptional repressor Rex (215 aa).

A DNA-binding region (H-T-H motif) is located at residues 18–57 (LYYRFLKNLHASGKQRVSSAELSDAVKVDSATIRRDFSYF). 92–97 (GVGNLG) is a binding site for NAD(+).

It belongs to the transcriptional regulatory Rex family. Homodimer.

The protein localises to the cytoplasm. In terms of biological role, modulates transcription in response to changes in cellular NADH/NAD(+) redox state. In Bacillus licheniformis (strain ATCC 14580 / DSM 13 / JCM 2505 / CCUG 7422 / NBRC 12200 / NCIMB 9375 / NCTC 10341 / NRRL NRS-1264 / Gibson 46), this protein is Redox-sensing transcriptional repressor Rex.